Here is a 929-residue protein sequence, read N- to C-terminus: Isoleucine--tRNA ligase (929 aa).

A 'HIGH' region motif is present at residues 58 to 68 (PYANGDIHIGH). An L-isoleucyl-5'-AMP-binding site is contributed by Glu-568. The 'KMSKS' region motif lies at 609 to 613 (KMSKS). Lys-612 contacts ATP. The Zn(2+) site is built by Cys-892, Cys-895, Cys-912, and Cys-915.

Belongs to the class-I aminoacyl-tRNA synthetase family. IleS type 1 subfamily. In terms of assembly, monomer. It depends on Zn(2+) as a cofactor.

It localises to the cytoplasm. The enzyme catalyses tRNA(Ile) + L-isoleucine + ATP = L-isoleucyl-tRNA(Ile) + AMP + diphosphate. Functionally, catalyzes the attachment of isoleucine to tRNA(Ile). As IleRS can inadvertently accommodate and process structurally similar amino acids such as valine, to avoid such errors it has two additional distinct tRNA(Ile)-dependent editing activities. One activity is designated as 'pretransfer' editing and involves the hydrolysis of activated Val-AMP. The other activity is designated 'posttransfer' editing and involves deacylation of mischarged Val-tRNA(Ile). This Thiobacillus denitrificans (strain ATCC 25259 / T1) protein is Isoleucine--tRNA ligase.